A 195-amino-acid polypeptide reads, in one-letter code: Imidazoleglycerol-phosphate dehydratase (195 aa).

It belongs to the imidazoleglycerol-phosphate dehydratase family.

The protein localises to the cytoplasm. The catalysed reaction is D-erythro-1-(imidazol-4-yl)glycerol 3-phosphate = 3-(imidazol-4-yl)-2-oxopropyl phosphate + H2O. It participates in amino-acid biosynthesis; L-histidine biosynthesis; L-histidine from 5-phospho-alpha-D-ribose 1-diphosphate: step 6/9. This chain is Imidazoleglycerol-phosphate dehydratase, found in Bordetella bronchiseptica (strain ATCC BAA-588 / NCTC 13252 / RB50) (Alcaligenes bronchisepticus).